A 257-amino-acid polypeptide reads, in one-letter code: MDLRAKPASTCSNYTLLLPRLVLEVSKNDKICVACNSPDFVNSNGNLNVKDLEAHAKARLHSSHFAGFVLCPIVASEDKVSTFDMYYHVIQERTVLYRPQNTVLTEMCCIISALENCVVPSASLLIQYLDRANQLFNRHPSRDSLFLLGGVKTLISTLMHWHGFQHPDVSQLPRGLQSYELYKDLESFDAECKDLMLSMFCKSFKLGDWNEENEQLEAFTFNLFYSPTILTKHFKSKIIISSIKEACLLKDCVLSLI.

The protein belongs to the herpesviridae cytoplasmic envelopment protein 1 family.

It is found in the virion. The protein localises to the virion tegument. The protein resides in the host cytoplasm. It localises to the host Golgi apparatus. Plays a critical role in cytoplasmic virus egress. Participates in the final step of tegumentation and envelope acquisition within the host cytoplasm. The sequence is that of Cytoplasmic envelopment protein 1 (42) from Connochaetes taurinus (Blue wildebeest).